Here is a 118-residue protein sequence, read N- to C-terminus: NADPH-dependent 7-cyano-7-deazaguanine reductase (118 aa).

Catalysis depends on cysteine 34, which acts as the Thioimide intermediate. Aspartate 41 (proton donor) is an active-site residue. Substrate is bound by residues 56–58 and 75–76; these read VEL and HE.

This sequence belongs to the GTP cyclohydrolase I family. QueF type 1 subfamily.

Its subcellular location is the cytoplasm. The enzyme catalyses 7-aminomethyl-7-carbaguanine + 2 NADP(+) = 7-cyano-7-deazaguanine + 2 NADPH + 3 H(+). The protein operates within tRNA modification; tRNA-queuosine biosynthesis. Its function is as follows. Catalyzes the NADPH-dependent reduction of 7-cyano-7-deazaguanine (preQ0) to 7-aminomethyl-7-deazaguanine (preQ1). The protein is NADPH-dependent 7-cyano-7-deazaguanine reductase of Halorhodospira halophila (strain DSM 244 / SL1) (Ectothiorhodospira halophila (strain DSM 244 / SL1)).